The following is a 130-amino-acid chain: Small ribosomal subunit protein uS8 (130 aa).

The protein belongs to the universal ribosomal protein uS8 family. As to quaternary structure, part of the 30S ribosomal subunit.

In terms of biological role, one of the primary rRNA binding proteins, it binds directly to 16S rRNA central domain where it helps coordinate assembly of the platform of the 30S subunit. The sequence is that of Small ribosomal subunit protein uS8 from Haloquadratum walsbyi (strain DSM 16790 / HBSQ001).